We begin with the raw amino-acid sequence, 84 residues long: uncharacterized protein (84 aa).

This is an uncharacterized protein from Dictyostelium discoideum (Social amoeba).